Reading from the N-terminus, the 120-residue chain is NAD(P)H-quinone oxidoreductase subunit 3 (120 aa).

3 helical membrane-spanning segments follow: residues 10–30, 64–84, and 89–109; these read LLVFLIVCSLLPILALGASAL, MFALVFVIFDVETVFLYPWAV, and LGLLAFVEALIFIAILVVGLV.

This sequence belongs to the complex I subunit 3 family. In terms of assembly, NDH-1 can be composed of about 15 different subunits; different subcomplexes with different compositions have been identified which probably have different functions.

It is found in the cellular thylakoid membrane. It catalyses the reaction a plastoquinone + NADH + (n+1) H(+)(in) = a plastoquinol + NAD(+) + n H(+)(out). It carries out the reaction a plastoquinone + NADPH + (n+1) H(+)(in) = a plastoquinol + NADP(+) + n H(+)(out). Functionally, NDH-1 shuttles electrons from an unknown electron donor, via FMN and iron-sulfur (Fe-S) centers, to quinones in the respiratory and/or the photosynthetic chain. The immediate electron acceptor for the enzyme in this species is believed to be plastoquinone. Couples the redox reaction to proton translocation, and thus conserves the redox energy in a proton gradient. Cyanobacterial NDH-1 also plays a role in inorganic carbon-concentration. The chain is NAD(P)H-quinone oxidoreductase subunit 3 from Synechococcus sp. (strain JA-2-3B'a(2-13)) (Cyanobacteria bacterium Yellowstone B-Prime).